Reading from the N-terminus, the 172-residue chain is Centrin-2 (172 aa).

The tract at residues 1 to 30 (MASNFKKANMASSSQRKRMSPKPELTEEQK) is disordered. A2 carries the N-acetylalanine modification. Positions 2–25 (ASNFKKANMASSSQRKRMSPKPEL) are required for self-assembly. S20 carries the phosphoserine modification. K22 participates in a covalent cross-link: Glycyl lysine isopeptide (Lys-Gly) (interchain with G-Cter in SUMO2). Residue T26 is modified to Phosphothreonine. 4 consecutive EF-hand domains span residues 28-63 (EQKQ…LGFE), 64-99 (PKKE…KMSE), 101-136 (DTKE…LGEN), and 137-172 (LTDE…TSLY). Ca(2+)-binding residues include D41, D43, T45, T47, and E52. The Ca(2+) site is built by D150, D152, D154, E156, and E161.

It belongs to the centrin family. As to quaternary structure, monomer. Homooligomer. Interacts with SFI1. Interacts with CCP110. Component of the XPC complex composed of XPC, RAD23B and CETN2. Component of the nuclear pore complex (NPC)-associated TREX-2 complex (transcription and export complex 2), composed of at least GANP, 2 copies of ENY2, PCID2, SEM1/DSS1, and either centrin CETN2 or centrin CETN3. The TREX-2 complex also associates with ALYREF/ALY and with the nucleoporin NUP153. Interacts with USP49. Forms a microtubule-associated complex with POC5, POC1B and FAM161A. Interacts with CCDC15.

Its subcellular location is the cytoplasm. The protein resides in the cytoskeleton. It localises to the microtubule organizing center. The protein localises to the centrosome. It is found in the centriole. Its subcellular location is the nucleus envelope. The protein resides in the nucleus. It localises to the nuclear pore complex. Its function is as follows. Plays a fundamental role in microtubule organizing center structure and function. Required for centriole duplication and correct spindle formation. Has a role in regulating cytokinesis and genome stability via cooperation with CALM1 and CCP110. Involved in global genome nucleotide excision repair (GG-NER) by acting as component of the XPC complex. Cooperatively with RAD23B appears to stabilize XPC. In vitro, stimulates DNA binding of the XPC:RAD23B dimer. Functionally, the XPC complex is proposed to represent the first factor bound at the sites of DNA damage and together with other core recognition factors, XPA, RPA and the TFIIH complex, is part of the pre-incision (or initial recognition) complex. The XPC complex recognizes a wide spectrum of damaged DNA characterized by distortions of the DNA helix such as single-stranded loops, mismatched bubbles or single-stranded overhangs. The orientation of XPC complex binding appears to be crucial for inducing a productive NER. XPC complex is proposed to recognize and to interact with unpaired bases on the undamaged DNA strand which is followed by recruitment of the TFIIH complex and subsequent scanning for lesions in the opposite strand in a 5'-to-3' direction by the NER machinery. Cyclobutane pyrimidine dimers (CPDs) which are formed upon UV-induced DNA damage esacpe detection by the XPC complex due to a low degree of structural perurbation. Instead they are detected by the UV-DDB complex which in turn recruits and cooperates with the XPC complex in the respective DNA repair. In terms of biological role, as a component of the TREX-2 complex, involved in the export of mRNAs to the cytoplasm through the nuclear pores. The protein is Centrin-2 (CETN2) of Homo sapiens (Human).